A 349-amino-acid chain; its full sequence is tRNA N6-adenosine threonylcarbamoyltransferase (349 aa).

The Fe cation site is built by His116 and His120. Residues 139–143 (LVSGG), Asp172, Gly185, and Asn283 each bind substrate. Asp311 contributes to the Fe cation binding site.

Belongs to the KAE1 / TsaD family. Fe(2+) serves as cofactor.

It localises to the cytoplasm. It catalyses the reaction L-threonylcarbamoyladenylate + adenosine(37) in tRNA = N(6)-L-threonylcarbamoyladenosine(37) in tRNA + AMP + H(+). Functionally, required for the formation of a threonylcarbamoyl group on adenosine at position 37 (t(6)A37) in tRNAs that read codons beginning with adenine. Is involved in the transfer of the threonylcarbamoyl moiety of threonylcarbamoyl-AMP (TC-AMP) to the N6 group of A37, together with TsaE and TsaB. TsaD likely plays a direct catalytic role in this reaction. This chain is tRNA N6-adenosine threonylcarbamoyltransferase, found in Colwellia psychrerythraea (strain 34H / ATCC BAA-681) (Vibrio psychroerythus).